The chain runs to 334 residues: Ketol-acid reductoisomerase (NADP(+)) (334 aa).

In terms of domain architecture, KARI N-terminal Rossmann spans 2-181 (TKVYYDETVT…GATRAGVIET (180 aa)). Residues 25-28 (YGSQ), arginine 48, serine 52, and 82-85 (DEIQ) contribute to the NADP(+) site. Histidine 107 is a catalytic residue. Position 133 (glycine 133) interacts with NADP(+). A KARI C-terminal knotted domain is found at 182–327 (TFKEETETDL…RELREMMPFI (146 aa)). 4 residues coordinate Mg(2+): aspartate 190, glutamate 194, glutamate 226, and glutamate 230. Serine 251 is a binding site for substrate.

It belongs to the ketol-acid reductoisomerase family. Requires Mg(2+) as cofactor.

The catalysed reaction is (2R)-2,3-dihydroxy-3-methylbutanoate + NADP(+) = (2S)-2-acetolactate + NADPH + H(+). It catalyses the reaction (2R,3R)-2,3-dihydroxy-3-methylpentanoate + NADP(+) = (S)-2-ethyl-2-hydroxy-3-oxobutanoate + NADPH + H(+). The protein operates within amino-acid biosynthesis; L-isoleucine biosynthesis; L-isoleucine from 2-oxobutanoate: step 2/4. Its pathway is amino-acid biosynthesis; L-valine biosynthesis; L-valine from pyruvate: step 2/4. Functionally, involved in the biosynthesis of branched-chain amino acids (BCAA). Catalyzes an alkyl-migration followed by a ketol-acid reduction of (S)-2-acetolactate (S2AL) to yield (R)-2,3-dihydroxy-isovalerate. In the isomerase reaction, S2AL is rearranged via a Mg-dependent methyl migration to produce 3-hydroxy-3-methyl-2-ketobutyrate (HMKB). In the reductase reaction, this 2-ketoacid undergoes a metal-dependent reduction by NADPH to yield (R)-2,3-dihydroxy-isovalerate. The protein is Ketol-acid reductoisomerase (NADP(+)) of Staphylococcus epidermidis (strain ATCC 35984 / DSM 28319 / BCRC 17069 / CCUG 31568 / BM 3577 / RP62A).